The following is a 117-amino-acid chain: Large ribosomal subunit protein bL20 (117 aa).

This sequence belongs to the bacterial ribosomal protein bL20 family.

Its function is as follows. Binds directly to 23S ribosomal RNA and is necessary for the in vitro assembly process of the 50S ribosomal subunit. It is not involved in the protein synthesizing functions of that subunit. This chain is Large ribosomal subunit protein bL20, found in Thermomicrobium roseum (strain ATCC 27502 / DSM 5159 / P-2).